We begin with the raw amino-acid sequence, 364 residues long: tRNA 2-selenouridine synthase (364 aa).

The region spanning 14-137 (LIADTPIIDV…LRQTAIQATI (124 aa)) is the Rhodanese domain. Cys97 acts as the S-selanylcysteine intermediate in catalysis.

Belongs to the SelU family. In terms of assembly, monomer.

The enzyme catalyses 5-methylaminomethyl-2-thiouridine(34) in tRNA + selenophosphate + (2E)-geranyl diphosphate + H2O + H(+) = 5-methylaminomethyl-2-selenouridine(34) in tRNA + (2E)-thiogeraniol + phosphate + diphosphate. It carries out the reaction 5-methylaminomethyl-2-thiouridine(34) in tRNA + (2E)-geranyl diphosphate = 5-methylaminomethyl-S-(2E)-geranyl-thiouridine(34) in tRNA + diphosphate. It catalyses the reaction 5-methylaminomethyl-S-(2E)-geranyl-thiouridine(34) in tRNA + selenophosphate + H(+) = 5-methylaminomethyl-2-(Se-phospho)selenouridine(34) in tRNA + (2E)-thiogeraniol. The catalysed reaction is 5-methylaminomethyl-2-(Se-phospho)selenouridine(34) in tRNA + H2O = 5-methylaminomethyl-2-selenouridine(34) in tRNA + phosphate. In terms of biological role, involved in the post-transcriptional modification of the uridine at the wobble position (U34) of tRNA(Lys), tRNA(Glu) and tRNA(Gln). Catalyzes the conversion of 2-thiouridine (S2U-RNA) to 2-selenouridine (Se2U-RNA). Acts in a two-step process involving geranylation of 2-thiouridine (S2U) to S-geranyl-2-thiouridine (geS2U) and subsequent selenation of the latter derivative to 2-selenouridine (Se2U) in the tRNA chain. This Escherichia fergusonii (strain ATCC 35469 / DSM 13698 / CCUG 18766 / IAM 14443 / JCM 21226 / LMG 7866 / NBRC 102419 / NCTC 12128 / CDC 0568-73) protein is tRNA 2-selenouridine synthase.